The primary structure comprises 154 residues: Interleukin-2 (154 aa).

The first 20 residues, 1–20, serve as a signal peptide directing secretion; the sequence is MYKLQFLSCIALTLALVANS. Thr23 carries O-linked (GalNAc...) threonine glycosylation. An intrachain disulfide couples Cys78 to Cys126. N-linked (GlcNAc...) asparagine glycosylation occurs at Asn111.

This sequence belongs to the IL-2 family.

The protein localises to the secreted. Functionally, cytokine produced by activated CD4-positive helper T-cells and to a lesser extend activated CD8-positive T-cells and natural killer (NK) cells that plays pivotal roles in the immune response and tolerance. Binds to a receptor complex composed of either the high-affinity trimeric IL-2R (IL2RA/CD25, IL2RB/CD122 and IL2RG/CD132) or the low-affinity dimeric IL-2R (IL2RB and IL2RG). Interaction with the receptor leads to oligomerization and conformation changes in the IL-2R subunits resulting in downstream signaling starting with phosphorylation of JAK1 and JAK3. In turn, JAK1 and JAK3 phosphorylate the receptor to form a docking site leading to the phosphorylation of several substrates including STAT5. This process leads to activation of several pathways including STAT, phosphoinositide-3-kinase/PI3K and mitogen-activated protein kinase/MAPK pathways. Functions as a T-cell growth factor and can increase NK-cell cytolytic activity as well. Promotes strong proliferation of activated B-cells and subsequently immunoglobulin production. Plays a pivotal role in regulating the adaptive immune system by controlling the survival and proliferation of regulatory T-cells, which are required for the maintenance of immune tolerance. Moreover, participates in the differentiation and homeostasis of effector T-cell subsets, including Th1, Th2, Th17 as well as memory CD8-positive T-cells. The sequence is that of Interleukin-2 (IL2) from Camelus bactrianus (Bactrian camel).